The sequence spans 327 residues: Thiamine-monophosphate kinase (327 aa).

Mg(2+) contacts are provided by D30, S45, S46, and D47. H54 lines the substrate pocket. Mg(2+) is bound at residue D76. ATP-binding positions include Y106, 123–124 (GD), and R149. D124 contacts Mg(2+). D221 contacts Mg(2+). S223 is a binding site for ATP. D224 contacts Mg(2+). Residues E268 and F321 each coordinate substrate.

Belongs to the thiamine-monophosphate kinase family.

It catalyses the reaction thiamine phosphate + ATP = thiamine diphosphate + ADP. The protein operates within cofactor biosynthesis; thiamine diphosphate biosynthesis; thiamine diphosphate from thiamine phosphate: step 1/1. In terms of biological role, catalyzes the ATP-dependent phosphorylation of thiamine-monophosphate (TMP) to form thiamine-pyrophosphate (TPP), the active form of vitamin B1. The sequence is that of Thiamine-monophosphate kinase from Synechococcus elongatus (strain ATCC 33912 / PCC 7942 / FACHB-805) (Anacystis nidulans R2).